The following is a 1155-amino-acid chain: ATP-dependent helicase/deoxyribonuclease subunit B (1155 aa).

An ATP-binding site is contributed by 8–15; that stretch reads GRSGSGKS. [4Fe-4S] cluster is bound by residues Cys-793, Cys-1115, Cys-1118, and Cys-1124.

It belongs to the helicase family. AddB/RexB type 1 subfamily. In terms of assembly, heterodimer of AddA and AddB. It depends on Mg(2+) as a cofactor. Requires [4Fe-4S] cluster as cofactor.

Functionally, the heterodimer acts as both an ATP-dependent DNA helicase and an ATP-dependent, dual-direction single-stranded exonuclease. Recognizes the chi site generating a DNA molecule suitable for the initiation of homologous recombination. The AddB subunit has 5' -&gt; 3' nuclease activity but not helicase activity. This chain is ATP-dependent helicase/deoxyribonuclease subunit B, found in Clostridioides difficile (strain 630) (Peptoclostridium difficile).